We begin with the raw amino-acid sequence, 647 residues long: MPDPATYRPAPGSIPVEPGVYRFRDPHGRVIYVGKAKSLRSRLTSYFADVANLHPRTRQMVTTAAKVEWTVVNTEVEALQLEYNWIKEFDPRFNVRYRDDKSYPVLAVTLNEEFPRLMVYRGPRRKGVRYFGPYSHAWAIRETLDLLTRVFPARTCSAGVFKRHKQIDRPCLLGYIDKCSAPCIGRVSAEQHRQIVDDFCDFLSGKTDRFARELEQQMNAAAAELDFERAARLRDDLGALKRAMEKQAVVLGDGTDADVVAFADDELEAAVQVFHVRGGRVRGQRGWIVEKSADPGDSGEEQLVEQFLTQFYGEQAELGGAADESVNPVPREVLVPCLPSNADELTSWLSGLRGSRVALRVPRRGDKRALAETVQRNAKEALQQHKLKRAGDFNARSAALQNIQEALGLSEAPLRIECVDISHVQGTDVVGSLVVFEDGLPRKSDYRHFAIREAAGQGRSDDVASIAEVTRRRFARHLSEQNDPNMLSPEGKSRRFAYPPNLYVVDGGAPQVNAASAVLEELGITDVAVIGLAKRLEEVWVPSEPDPVIMPRNSEGLYLLQRVRDEAHRFAITYHRSKRSKRMTASVLDSVPGLGEHRRKALVSHFGSIARLKEATVDQITAVPGIGVATATAVLEALRPDESKAAP.

Positions 16 to 95 constitute a GIY-YIG domain; the sequence is VEPGVYRFRD…IKEFDPRFNV (80 aa). A UVR domain is found at 208 to 243; sequence DRFARELEQQMNAAAAELDFERAARLRDDLGALKRA.

The protein belongs to the UvrC family. As to quaternary structure, interacts with UvrB in an incision complex.

The protein resides in the cytoplasm. Its function is as follows. The UvrABC repair system catalyzes the recognition and processing of DNA lesions. UvrC both incises the 5' and 3' sides of the lesion. The N-terminal half is responsible for the 3' incision and the C-terminal half is responsible for the 5' incision. This chain is UvrABC system protein C, found in Mycolicibacterium paratuberculosis (strain ATCC BAA-968 / K-10) (Mycobacterium paratuberculosis).